The following is a 289-amino-acid chain: D-alanine aminotransferase (289 aa).

Tyr-31 is a binding site for substrate. Arg-50 is a pyridoxal 5'-phosphate binding site. Substrate contacts are provided by Arg-99 and His-101. Lys-147 carries the N6-(pyridoxal phosphate)lysine modification. Residue Glu-179 participates in pyridoxal 5'-phosphate binding.

The protein belongs to the class-IV pyridoxal-phosphate-dependent aminotransferase family. Homodimer. It depends on pyridoxal 5'-phosphate as a cofactor.

It catalyses the reaction D-alanine + 2-oxoglutarate = D-glutamate + pyruvate. Functionally, acts on the D-isomers of alanine, leucine, aspartate, glutamate, aminobutyrate, norvaline and asparagine. The enzyme transfers an amino group from a substrate D-amino acid to the pyridoxal phosphate cofactor to form pyridoxamine and an alpha-keto acid in the first half-reaction. The second half-reaction is the reverse of the first, transferring the amino group from the pyridoxamine to a second alpha-keto acid to form the product D-amino acid via a ping-pong mechanism. This is an important process in the formation of D-alanine and D-glutamate, which are essential bacterial cell wall components. The polypeptide is D-alanine aminotransferase (dat) (Listeria monocytogenes serotype 1/2a (strain 10403S)).